Reading from the N-terminus, the 420-residue chain is Vasopressin V1a receptor (420 aa).

The tract at residues 1–20 (MSFPRGSYDPAASNSSPWWP) is disordered. Over 1-54 (MSFPRGSYDPAASNSSPWWPLSAEDANSSWEAAGHQKGSDPSGDVRNEELAKLE) the chain is Extracellular. An N-linked (GlcNAc...) asparagine glycan is attached at asparagine 27. A helical membrane pass occupies residues 55-75 (IAVLAVIFVVAVLGNSSVLLA). At 76 to 92 (LHRTPRKTSRMHLFIRH) the chain is on the cytoplasmic side. The chain crosses the membrane as a helical span at residues 93 to 113 (LSLADLAVAFFQVLPQLCWDI). Residues 114–125 (TYRFRGPDWLCR) are Extracellular-facing. A disulfide bridge links cysteine 124 with cysteine 205. A helical membrane pass occupies residues 126–146 (VVKHLQVFAMFASAYMLVVMT). At 147-168 (ADRYIAVCHPLKTLQQPTRRSR) the chain is on the cytoplasmic side. Residues 169–189 (LMIAASWVLSFLLSTPQYFIF) traverse the membrane as a helical segment. The Extracellular portion of the chain corresponds to 190–225 (SMIEIEVNNGTKTQDCWATFIQPWGTRAYVTWMTSG). An N-linked (GlcNAc...) asparagine glycan is attached at asparagine 198. Residues 226-246 (VFVVPVVILGTCYGFICYHIW) form a helical membrane-spanning segment. Topologically, residues 247-294 (RNVRGKTASRQSKGSGEDVAPFHKGLLVTPCVSSVKTISRAKIRTVKM) are cytoplasmic. Residues 295–315 (TFVIVTAYILCWAPFFIVQMW) form a helical membrane-spanning segment. Residues 316-331 (SVWDDNFIWTDSENPS) lie on the Extracellular side of the membrane. Residues 332-352 (ITITALLASLNSCCNPWIYMF) traverse the membrane as a helical segment. Over 353–420 (FSGHLLQDCV…RSIRFIPVST (68 aa)) the chain is Cytoplasmic. S-palmitoyl cysteine attachment occurs at residues cysteine 367 and cysteine 368. Positions 379–411 (DSDNMSRRHTSYSNNRSPTNSTGTWKDSPKSSR) are disordered. Residues 389–403 (SYSNNRSPTNSTGTW) show a composition bias toward polar residues. The residue at position 406 (serine 406) is a Phosphoserine.

Belongs to the G-protein coupled receptor 1 family. Vasopressin/oxytocin receptor subfamily.

It localises to the cell membrane. Functionally, receptor for arginine vasopressin. The activity of this receptor is mediated by G proteins which activate a phosphatidyl-inositol-calcium second messenger system. Involved in social memory formation. This is Vasopressin V1a receptor (Avpr1a) from Microtus ochrogaster (Prairie vole).